The chain runs to 267 residues: Phosphoinositide-3-kinase-interacting protein 1 (267 aa).

Residues 1-21 (MLLAWVHTFLLSNMLLAEAYG) form the signal peptide. Residues 22–172 (SGGCFWDNGH…NSKEKKDLGT (151 aa)) lie on the Extracellular side of the membrane. The region spanning 24 to 101 (GCFWDNGHLY…EKRPCEDLRC (78 aa)) is the Kringle domain. 3 cysteine pairs are disulfide-bonded: Cys25–Cys101, Cys46–Cys82, and Cys70–Cys96. The segment covering 91–101 (PEKRPCEDLRC) has biased composition (basic and acidic residues). The disordered stretch occupies residues 91-122 (PEKRPCEDLRCPETTSQAPPPPPPSSTTELEE). The helical transmembrane segment at 173–193 (LGYVLGVTMTVIIIAIGVGIV) threads the bilayer. Topologically, residues 194–267 (LGYTYKRGKD…LTDQAGTPGA (74 aa)) are cytoplasmic.

The protein resides in the cell membrane. Functionally, negative regulator of hepatic phosphatidylinositol 3-kinase (PI3K) activity. This Rattus norvegicus (Rat) protein is Phosphoinositide-3-kinase-interacting protein 1 (Pik3ip1).